The primary structure comprises 428 residues: Serine--tRNA ligase (428 aa).

Residue 235-237 (TAE) participates in L-serine binding. 266 to 268 (RSE) serves as a coordination point for ATP. Glutamate 289 contributes to the L-serine binding site. 353–356 (EISS) lines the ATP pocket. An L-serine-binding site is contributed by serine 389.

It belongs to the class-II aminoacyl-tRNA synthetase family. Type-1 seryl-tRNA synthetase subfamily. In terms of assembly, homodimer. The tRNA molecule binds across the dimer.

It localises to the cytoplasm. The catalysed reaction is tRNA(Ser) + L-serine + ATP = L-seryl-tRNA(Ser) + AMP + diphosphate + H(+). The enzyme catalyses tRNA(Sec) + L-serine + ATP = L-seryl-tRNA(Sec) + AMP + diphosphate + H(+). It participates in aminoacyl-tRNA biosynthesis; selenocysteinyl-tRNA(Sec) biosynthesis; L-seryl-tRNA(Sec) from L-serine and tRNA(Sec): step 1/1. In terms of biological role, catalyzes the attachment of serine to tRNA(Ser). Is also able to aminoacylate tRNA(Sec) with serine, to form the misacylated tRNA L-seryl-tRNA(Sec), which will be further converted into selenocysteinyl-tRNA(Sec). The chain is Serine--tRNA ligase from Shewanella oneidensis (strain ATCC 700550 / JCM 31522 / CIP 106686 / LMG 19005 / NCIMB 14063 / MR-1).